A 218-amino-acid chain; its full sequence is MGRIFLTGEKANSVLKRYPRANGLFEEIRQGNIERECKEEVCTFEEAREAFENNEKTKEFWNTYTKAQQGESNRGSDWFQFYLTFPLIFGLFIILLVIFLIWRCFLRNKTRRQTVTESHIPFPQHLNIITTPPPPDEVFDNSGLSPGFLEYVVGRSDSVSTRLSNCDPPPTYEEATGQMNLRRSETEPHLDPPPEYEDIINSNSASAIAMVPVATTIK.

Positions 1 to 20 are excised as a propeptide; it reads MGRIFLTGEKANSVLKRYPR. Residues 20–66 enclose the Gla domain; sequence RANGLFEEIRQGNIERECKEEVCTFEEAREAFENNEKTKEFWNTYTK. The Extracellular portion of the chain corresponds to 21-80; sequence ANGLFEEIRQGNIERECKEEVCTFEEAREAFENNEKTKEFWNTYTKAQQGESNRGSDWFQ. A disulfide bridge connects residues cysteine 37 and cysteine 42. Residues 81-101 traverse the membrane as a helical segment; that stretch reads FYLTFPLIFGLFIILLVIFLI. Residues 102 to 218 are Cytoplasmic-facing; the sequence is WRCFLRNKTR…AMVPVATTIK (117 aa). The interval 160-192 is disordered; sequence STRLSNCDPPPTYEEATGQMNLRRSETEPHLDP. Residues 182-192 are compositionally biased toward basic and acidic residues; it reads RRSETEPHLDP.

In terms of processing, gla residues are produced after subsequent post-translational modifications of glutamate by a vitamin K-dependent gamma-carboxylase.

It localises to the membrane. In Bos taurus (Bovine), this protein is Transmembrane gamma-carboxyglutamic acid protein 1 (PRRG1).